The chain runs to 473 residues: Inactive FRIGIDA-like protein 2 (473 aa).

Coiled-coil stretches lie at residues 3-35 (AAES…RSLL) and 306-361 (SLKV…RATK). Positions 356–384 (RKRATKFNSPANPQQPQEQKVDNKRPRVA) are disordered. Positions 361-373 (KFNSPANPQQPQE) are enriched in polar residues.

Belongs to the Frigida family. In terms of tissue distribution, expressed at low levels throughout the plant, with slightly higher expression in developing seeds and the highest expression in pollen.

Its function is as follows. Inactive FRIGIDA-like 2 protein. In Arabidopsis thaliana (Mouse-ear cress), this protein is Inactive FRIGIDA-like protein 2 (FRL2).